The following is a 159-amino-acid chain: Protein C2 (159 aa).

The Nuclear localization signal motif lies at Lys43–Ala60. A zinc finger spans residues Cys65–His81. A disordered region spans residues Pro102 to Leu139. Positions His110–Asn124 are enriched in low complexity.

The protein belongs to the geminiviridae transcriptional activator protein family. Monomer. Suppress local silencing by interacting with and inactivating host adenosine kinase 2 (ADK2) in the cytoplasm. Interacts with and inhibits host SNF1 kinase.

It is found in the host cytoplasm. Its function is as follows. Acts as a suppressor of RNA-mediated gene silencing, also known as post-transcriptional gene silencing (PTGS), a mechanism of plant viral defense that limits the accumulation of viral RNAs. Suppresses the host RNA silencing by inhibiting adenosine kinase 2 (ADK2), a kinase involved in a general methylation pathway. Also suppresses the host basal defense by interacting with and inhibiting SNF1 kinase, a key regulator of cell metabolism implicated in innate antiviral defense. Determines pathogenicity. This Tomato pseudo-curly top virus (TPCTV) protein is Protein C2.